The sequence spans 120 residues: Methylglyoxal synthase (120 aa).

The region spanning 1–120 is the MGS-like domain; that stretch reads MRIALIAHDN…TAEILVESVL (120 aa). Substrate is bound by residues H8, K12, and 54-55; that span reads SG. D60 functions as the Proton donor/acceptor in the catalytic mechanism. Substrate is bound at residue H87.

This sequence belongs to the methylglyoxal synthase family.

It catalyses the reaction dihydroxyacetone phosphate = methylglyoxal + phosphate. Catalyzes the formation of methylglyoxal from dihydroxyacetone phosphate. This chain is Methylglyoxal synthase, found in Natranaerobius thermophilus (strain ATCC BAA-1301 / DSM 18059 / JW/NM-WN-LF).